Here is a 514-residue protein sequence, read N- to C-terminus: Flagellin B (514 aa).

It belongs to the bacterial flagellin family. In terms of assembly, heteromer of FlaA and FlaB. FlaB is located proximal to the hook while the remainder of the filament is composed of the predominant FlaA.

It localises to the secreted. Its subcellular location is the bacterial flagellum. Functionally, flagellin is the subunit protein which polymerizes to form the filaments of bacterial flagella. Important for motility and virulence. The chain is Flagellin B (flaB) from Helicobacter pylori (strain ATCC 700392 / 26695) (Campylobacter pylori).